Reading from the N-terminus, the 640-residue chain is Protein SPT10 (640 aa).

The interval 1–30 (MLNQHTSSVPDDEHLQMAHQNSSSEVRNEA) is disordered. The region spanning 121-259 (LDYSMDTEAD…AGILKGFDVP (139 aa)) is the N-acetyltransferase domain. Positions 534-565 (PHLTNNESQDHANPVNRDERDMNHSVPDLDRN) are disordered. Positions 549–565 (NRDERDMNHSVPDLDRN) are enriched in basic and acidic residues.

Required for normal transcription at a number of loci in yeast. Affects transcription at Ty1 elements, at PHO5, STE6 and ADH2. This Saccharomyces cerevisiae (strain ATCC 204508 / S288c) (Baker's yeast) protein is Protein SPT10 (SPT10).